Reading from the N-terminus, the 499-residue chain is Glutelin type-A 1 (499 aa).

Residues 1-24 form the signal peptide; the sequence is MASINRPIVFFTVCLFLLCNGSLA. Disulfide bonds link Cys46–Cys79 and Cys122–Cys313. 2 consecutive Cupin type-1 domains span residues 51–248 and 319–468; these read LQAF…QVAR and QNID…EEAQ.

It belongs to the 11S seed storage protein (globulins) family. As to quaternary structure, hexamer; each subunit is composed of an acidic and a basic chain derived from a single precursor and linked by a disulfide bond.

Functionally, seed storage protein. This chain is Glutelin type-A 1 (GLUA1), found in Oryza sativa subsp. japonica (Rice).